Reading from the N-terminus, the 279-residue chain is Tryptophan prenyltransferase ComQ (279 aa).

Positions 67 and 71 each coordinate Mg(2+).

This sequence belongs to the FPP/GGPP synthase family. Mg(2+) is required as a cofactor.

Its subcellular location is the cell membrane. It catalyses the reaction L-tryptophyl-[protein] + (2E)-geranyl diphosphate = (2S,3R)-3-geranyl-2,3-dihydro-2,N(alpha)-cyclo-L-tryptophyl-[protein] + diphosphate. In terms of biological role, part of a major quorum-sensing system that regulates the development of genetic competence. Involved in the maturation of the competence pheromone ComX. Acts by catalyzing the transfer of a geranyl group on the ComX pheromone. Cannot use farnesyl diphosphate (FPP). The chain is Tryptophan prenyltransferase ComQ from Bacillus spizizenii (Bacillus subtilis subsp. spizizenii).